We begin with the raw amino-acid sequence, 380 residues long: Palmitoyltransferase ZDHHC20 (380 aa).

At 1–14 (MAPWTLWRCCQRVV) the chain is on the cytoplasmic side. The chain crosses the membrane as a helical span at residues 15 to 35 (GWVPVLFITFVVVWSYYAYVV). At 36–53 (ELCVSTISRTGEKGKTVV) the chain is on the lumenal side. A helical transmembrane segment spans residues 54-74 (YLVAFHLFFVMFVWSYWMTIF). The Cytoplasmic segment spans residues 75–169 (TSPASPSKEF…NNCVGFTNYK (95 aa)). The region spanning 126-176 (RYCEKCQLIKPDRAHHCSACDRCVLKMDHHCPWVNNCVGFTNYKFFMLFLL) is the DHHC domain. Zn(2+)-binding residues include C128 and C131. Substrate is bound by residues K135 and 140 to 143 (HHCS). Zn(2+) is bound by residues H141, C142, C145, C148, and H155. C156 (S-palmitoyl cysteine intermediate) is an active-site residue. Residue C162 coordinates Zn(2+). The chain crosses the membrane as a helical span at residues 170-190 (FFMLFLLYSLLYCLFVAATVL). Residues 191–222 (EYFIKFWTLCRRKSTENCPKNEPTVLNFPSAK) lie on the Lumenal side of the membrane. The helical transmembrane segment at 223 to 246 (FHVLFLFFVSAMFFVSVLSLFSYH) threads the bilayer. Residues 247–380 (CWLVGKNRTT…NNHVTVEIEN (134 aa)) lie on the Cytoplasmic side of the membrane. 3 positions are modified to phosphoserine: S320, S345, and S354.

This sequence belongs to the DHHC palmitoyltransferase family. Post-translationally, autopalmitoylated (in vitro). In terms of tissue distribution, highest levels in lung.

The protein resides in the golgi apparatus membrane. It localises to the cell membrane. Its subcellular location is the cytoplasm. It is found in the perinuclear region. The protein localises to the endoplasmic reticulum membrane. The protein resides in the endoplasmic reticulum-Golgi intermediate compartment membrane. It carries out the reaction L-cysteinyl-[protein] + hexadecanoyl-CoA = S-hexadecanoyl-L-cysteinyl-[protein] + CoA. It catalyses the reaction L-cysteinyl-[protein] + tetradecanoyl-CoA = S-tetradecanoyl-L-cysteinyl-[protein] + CoA. The catalysed reaction is L-cysteinyl-[protein] + octadecanoyl-CoA = S-octadecanoyl-L-cysteinyl-[protein] + CoA. Its function is as follows. Palmitoyltransferase that could catalyze the addition of palmitate onto various protein substrates. Catalyzes palmitoylation of Cys residues in the cytoplasmic C-terminus of EGFR, and modulates the duration of EGFR signaling by modulating palmitoylation-dependent EGFR internalization and degradation. Has a preference for acyl-CoA with C16 fatty acid chains. Can also utilize acyl-CoA with C14 and C18 fatty acid chains. May palmitoylate CALHM1 subunit of gustatory voltage-gated ion channels and modulate channel gating and kinetics. In Mus musculus (Mouse), this protein is Palmitoyltransferase ZDHHC20.